Consider the following 56-residue polypeptide: Bdellin B-3 (56 aa).

The Kazal-like domain occupies 1-42 (DTECVCTKELHRVCGSDGVTYDNECLATCHGASVAHDHACEG). Disulfide bonds link cysteine 4/cysteine 29, cysteine 6/cysteine 25, and cysteine 14/cysteine 40.

Functionally, proteinase inhibitor. Blocks the activity of trypsin, plasmin and sperm acrosin. The sequence is that of Bdellin B-3 from Hirudo medicinalis (Medicinal leech).